A 390-amino-acid polypeptide reads, in one-letter code: Heparan sulfate glucosamine 3-O-sulfotransferase 3B1 (390 aa).

A disordered region spans residues methionine 1–proline 25. Residues methionine 1–lysine 32 lie on the Cytoplasmic side of the membrane. A helical; Signal-anchor for type II membrane protein transmembrane segment spans residues leucine 33–glycine 53. Residues serine 54 to aspartate 390 are Lumenal-facing. The tract at residues proline 74–glycine 133 is disordered. Pro residues predominate over residues glycine 83 to threonine 96. Residues serine 123 to glycine 133 are compositionally biased toward low complexity. Lysine 147–arginine 151 provides a ligand contact to 3'-phosphoadenylyl sulfate. Substrate-binding positions include glutamate 169–arginine 175 and lysine 200–serine 203. 2 residues coordinate 3'-phosphoadenylyl sulfate: arginine 228 and serine 236. The N-linked (GlcNAc...) asparagine glycan is linked to asparagine 258. Tryptophan 268–serine 269 contacts substrate. Asparagine 329 carries N-linked (GlcNAc...) asparagine glycosylation. A disulfide bond links cysteine 336 and cysteine 348. 3'-phosphoadenylyl sulfate is bound at residue lysine 353–histidine 357.

It belongs to the sulfotransferase 1 family. In terms of tissue distribution, ubiquitous. Most abundant in liver and placenta, followed by heart and kidney.

The protein resides in the golgi apparatus membrane. The catalysed reaction is alpha-D-glucosaminyl-[heparan sulfate](n) + 3'-phosphoadenylyl sulfate = 3-sulfo-alpha-D-glucosaminyl-[heparan sulfate](n) + adenosine 3',5'-bisphosphate + H(+). Sulfotransferase that utilizes 3'-phospho-5'-adenylyl sulfate (PAPS) to catalyze the transfer of a sulfo group to an N-unsubstituted glucosamine linked to a 2-O-sulfo iduronic acid unit on heparan sulfate. Catalyzes the O-sulfation of glucosamine in IdoUA2S-GlcNS and also in IdoUA2S-GlcNH2. The substrate-specific O-sulfation generates an enzyme-modified heparan sulfate which acts as a binding receptor to Herpes simplex virus-1 (HSV-1) and permits its entry. Unlike HS3ST1/3-OST-1, does not convert non-anticoagulant heparan sulfate to anticoagulant heparan sulfate. The chain is Heparan sulfate glucosamine 3-O-sulfotransferase 3B1 (HS3ST3B1) from Homo sapiens (Human).